A 151-amino-acid chain; its full sequence is Putative pre-16S rRNA nuclease (151 aa).

This sequence belongs to the YqgF nuclease family.

Its subcellular location is the cytoplasm. Could be a nuclease involved in processing of the 5'-end of pre-16S rRNA. This is Putative pre-16S rRNA nuclease from Gloeothece citriformis (strain PCC 7424) (Cyanothece sp. (strain PCC 7424)).